Here is a 419-residue protein sequence, read N- to C-terminus: UDP-N-acetylglucosamine 1-carboxyvinyltransferase (419 aa).

22–23 (KN) is a phosphoenolpyruvate binding site. R93 lines the UDP-N-acetyl-alpha-D-glucosamine pocket. C117 functions as the Proton donor in the catalytic mechanism. 2-(S-cysteinyl)pyruvic acid O-phosphothioketal is present on C117. Residues D307 and I329 each coordinate UDP-N-acetyl-alpha-D-glucosamine.

It belongs to the EPSP synthase family. MurA subfamily.

The protein resides in the cytoplasm. The catalysed reaction is phosphoenolpyruvate + UDP-N-acetyl-alpha-D-glucosamine = UDP-N-acetyl-3-O-(1-carboxyvinyl)-alpha-D-glucosamine + phosphate. The protein operates within cell wall biogenesis; peptidoglycan biosynthesis. Its function is as follows. Cell wall formation. Adds enolpyruvyl to UDP-N-acetylglucosamine. The protein is UDP-N-acetylglucosamine 1-carboxyvinyltransferase of Pseudoalteromonas atlantica (strain T6c / ATCC BAA-1087).